We begin with the raw amino-acid sequence, 255 residues long: Indole-3-glycerol phosphate synthase (255 aa).

It belongs to the TrpC family.

It catalyses the reaction 1-(2-carboxyphenylamino)-1-deoxy-D-ribulose 5-phosphate + H(+) = (1S,2R)-1-C-(indol-3-yl)glycerol 3-phosphate + CO2 + H2O. It functions in the pathway amino-acid biosynthesis; L-tryptophan biosynthesis; L-tryptophan from chorismate: step 4/5. The protein is Indole-3-glycerol phosphate synthase of Shouchella clausii (strain KSM-K16) (Alkalihalobacillus clausii).